Here is a 319-residue protein sequence, read N- to C-terminus: D-alanine--D-alanine ligase B (319 aa).

The ATP-grasp domain maps to 117–312 (KQVWQSLGPA…FQQLVLAILA (196 aa)). 143-198 (ATELGFPLIVKPAHEGSSIGMAKVNSVDELIAAWKAASTYDSQVLVEQWIQGPEFT) lines the ATP pocket. Asp-266, Glu-279, and Asn-281 together coordinate Mg(2+).

Belongs to the D-alanine--D-alanine ligase family. Mg(2+) serves as cofactor. The cofactor is Mn(2+).

The protein localises to the cytoplasm. It catalyses the reaction 2 D-alanine + ATP = D-alanyl-D-alanine + ADP + phosphate + H(+). It functions in the pathway cell wall biogenesis; peptidoglycan biosynthesis. In terms of biological role, cell wall formation. The chain is D-alanine--D-alanine ligase B from Pseudomonas syringae pv. tomato (strain ATCC BAA-871 / DC3000).